A 574-amino-acid polypeptide reads, in one-letter code: Probable glucomannan 4-beta-mannosyltransferase 6 (574 aa).

A helical membrane pass occupies residues 87-107 (VVACMVMSVIVLAEKVFLGVV). Residue aspartate 180 is part of the active site. Substrate contacts are provided by aspartate 239 and aspartate 241. Residue aspartate 333 is part of the active site. 4 helical membrane-spanning segments follow: residues 412–432 (IIST…KVFF), 437–457 (IPLW…SVGT), 523–543 (FHCL…YDYL), and 548–568 (IFYI…FEFM).

Belongs to the glycosyltransferase 2 family. Plant cellulose synthase-like A subfamily.

It is found in the golgi apparatus membrane. The enzyme catalyses GDP-mannose + (glucomannan)n = GDP + (glucomannan)n+1.. Functionally, probable mannan synthase which consists of a 4-beta-mannosyltransferase activity on mannan using GDP-mannose. The beta-1,4-mannan product is the backbone for galactomannan synthesis by galactomannan galactosyltransferase. Galactomannan is a noncellulosic polysaccharides of plant cell wall. The chain is Probable glucomannan 4-beta-mannosyltransferase 6 from Oryza sativa subsp. japonica (Rice).